The sequence spans 220 residues: Deoxyribose-phosphate aldolase (220 aa).

Asp-89 serves as the catalytic Proton donor/acceptor. Lys-151 functions as the Schiff-base intermediate with acetaldehyde in the catalytic mechanism. Lys-180 functions as the Proton donor/acceptor in the catalytic mechanism.

It belongs to the DeoC/FbaB aldolase family. DeoC type 1 subfamily. Homotetramer, in solution and in the crystal structure.

Its subcellular location is the cytoplasm. The catalysed reaction is 2-deoxy-D-ribose 5-phosphate = D-glyceraldehyde 3-phosphate + acetaldehyde. The protein operates within carbohydrate degradation; 2-deoxy-D-ribose 1-phosphate degradation; D-glyceraldehyde 3-phosphate and acetaldehyde from 2-deoxy-alpha-D-ribose 1-phosphate: step 2/2. In terms of biological role, catalyzes a reversible aldol reaction between acetaldehyde and D-glyceraldehyde 3-phosphate to generate 2-deoxy-D-ribose 5-phosphate. This Thermus thermophilus (strain ATCC 27634 / DSM 579 / HB8) protein is Deoxyribose-phosphate aldolase.